We begin with the raw amino-acid sequence, 242 residues long: Tryptophan synthase alpha chain (242 aa).

Active-site proton acceptor residues include E31 and D42.

This sequence belongs to the TrpA family. In terms of assembly, tetramer of two alpha and two beta chains.

The enzyme catalyses (1S,2R)-1-C-(indol-3-yl)glycerol 3-phosphate + L-serine = D-glyceraldehyde 3-phosphate + L-tryptophan + H2O. It functions in the pathway amino-acid biosynthesis; L-tryptophan biosynthesis; L-tryptophan from chorismate: step 5/5. The alpha subunit is responsible for the aldol cleavage of indoleglycerol phosphate to indole and glyceraldehyde 3-phosphate. In Staphylococcus aureus (strain MRSA252), this protein is Tryptophan synthase alpha chain.